The sequence spans 208 residues: Uracil phosphoribosyltransferase (208 aa).

Residues R78, R103, and 130-138 each bind 5-phospho-alpha-D-ribose 1-diphosphate; that span reads DPMLATGGS. Uracil is bound by residues I193 and 198 to 200; that span reads GDA. Position 199 (D199) interacts with 5-phospho-alpha-D-ribose 1-diphosphate.

This sequence belongs to the UPRTase family. The cofactor is Mg(2+).

It catalyses the reaction UMP + diphosphate = 5-phospho-alpha-D-ribose 1-diphosphate + uracil. The protein operates within pyrimidine metabolism; UMP biosynthesis via salvage pathway; UMP from uracil: step 1/1. Allosterically activated by GTP. Its function is as follows. Catalyzes the conversion of uracil and 5-phospho-alpha-D-ribose 1-diphosphate (PRPP) to UMP and diphosphate. The polypeptide is Uracil phosphoribosyltransferase (Aliivibrio salmonicida (strain LFI1238) (Vibrio salmonicida (strain LFI1238))).